The sequence spans 419 residues: Elongation factor Tu, chloroplastic (419 aa).

Residues 10-214 (KPHVNIGTIG…KVDEYIPTPD (205 aa)) form the tr-type G domain. A G1 region spans residues 19–26 (GHVDHGKT). 19–26 (GHVDHGKT) serves as a coordination point for GTP. Thr-26 is a Mg(2+) binding site. A G2 region spans residues 60 to 64 (GITIN). A G3 region spans residues 81 to 84 (DCPG). GTP is bound by residues 81-85 (DCPGH) and 136-139 (NKED). The segment at 136-139 (NKED) is G4. The tract at residues 174-176 (SAL) is G5.

It belongs to the TRAFAC class translation factor GTPase superfamily. Classic translation factor GTPase family. EF-Tu/EF-1A subfamily.

It is found in the plastid. Its subcellular location is the chloroplast. The catalysed reaction is GTP + H2O = GDP + phosphate + H(+). In terms of biological role, GTP hydrolase that promotes the GTP-dependent binding of aminoacyl-tRNA to the A-site of ribosomes during protein biosynthesis. In Tetradesmus obliquus (Green alga), this protein is Elongation factor Tu, chloroplastic (tufA).